We begin with the raw amino-acid sequence, 944 residues long: Probable UDP-N-acetylglucosamine--peptide N-acetylglucosaminyltransferase SPINDLY (944 aa).

TPR repeat units follow at residues 34 to 67 (GTDALRYANILRSRNKFADALQLYTTVLDKDGAN), 68 to 101 (VEALIGKGICLQAQSLPRQALDCFTEAVKVDPKN), 102 to 135 (ACALTHCGMIYKDEGHLVEAAEAYQKARSADPSY), 143 to 176 (AIVLTDLGTSLKLAGNTEDGIQKYCEALEVDSHY), 177 to 210 (APAYYNLGVVYSEMMQFDVALTCYEKAALERPLY), 211 to 244 (AEAYCNMGVIYKNRGELDAAIACYDRCLTISPNF), 252 to 285 (AIALTDLGTKVKIEGDINQGVAYYKKALFYNWHY), 286 to 319 (ADAMYNLGVAYGEMLNFEMAIVFYELALHFNPRC), 320 to 353 (AEACNNLGVIYKDRDNLDKAVECYQMALSIKPNF), 355 to 387 (QSLNNLGVVYTVQGKMDAAASMIEKAILANPTY), and 388 to 421 (AEAYNNLGVLYRDAGSITLSVQAYERCLQIDPDS). Residues 422–944 (RNAGQNRLLA…RCEANGHSSR (523 aa)) form a catalytic region region. The segment at 873 to 944 (NATAEEDNQS…RCEANGHSSR (72 aa)) is disordered. The segment covering 897–911 (PQPQIMVNGVTSPEG) has biased composition (polar residues).

This sequence belongs to the glycosyltransferase 41 family. O-GlcNAc transferase subfamily. Expressed in all parts of plants, including immature leaf blade, leaf sheath, mature leaf blade, roots, germinating embryos and aleurone layers.

The protein resides in the nucleus. The catalysed reaction is L-seryl-[protein] + UDP-N-acetyl-alpha-D-glucosamine = 3-O-(N-acetyl-beta-D-glucosaminyl)-L-seryl-[protein] + UDP + H(+). It catalyses the reaction L-threonyl-[protein] + UDP-N-acetyl-alpha-D-glucosamine = 3-O-(N-acetyl-beta-D-glucosaminyl)-L-threonyl-[protein] + UDP + H(+). The protein operates within protein modification; protein glycosylation. In terms of biological role, probable O-linked N-acetylglucosamine transferase (OGT) involved in various processes such as gibberellin (GA) signaling pathway. OGTs catalyze the addition of nucleotide-activated sugars directly onto the polypeptide through O-glycosidic linkage with the hydroxyl of serine or threonine. Probably acts by adding O-linked sugars to yet unknown proteins. The protein is Probable UDP-N-acetylglucosamine--peptide N-acetylglucosaminyltransferase SPINDLY (SPY) of Hordeum vulgare (Barley).